We begin with the raw amino-acid sequence, 423 residues long: Alpha-1-antichymotrypsin (423 aa).

The N-terminal stretch at 1–23 (MERMLPLLALGLLAAGFCPAVLC) is a signal peptide. N-linked (GlcNAc...) asparagine glycosylation is found at Asn33, Asn93, Asn106, Asn127, and Asn186. A DNA-binding region spans residues 235–237 (KKK). N-linked (GlcNAc...) asparagine glycosylation occurs at Asn271. The RCL stretch occupies residues 369–394 (GTEASAATAVKITLLSALVETRTIVR). The segment at 381–389 (TLLSALVET) is O-glycosylated at one site.

This sequence belongs to the serpin family. Interacts with DNAJC1. Post-translationally, N- and O-glycosylated. As to expression, plasma. Synthesized in the liver. Like the related alpha-1-antitrypsin, its concentration increases in the acute phase of inflammation or infection. Found in the amyloid plaques from the hippocampus of Alzheimer disease brains.

It is found in the secreted. In terms of biological role, although its physiological function is unclear, it can inhibit neutrophil cathepsin G and mast cell chymase, both of which can convert angiotensin-1 to the active angiotensin-2. The polypeptide is Alpha-1-antichymotrypsin (SERPINA3) (Homo sapiens (Human)).